A 365-amino-acid chain; its full sequence is MHKSEAPNEPEQLRKLFIGGLSFETTDESLREHFEQWGTLTDCVVMRDPNSKRSRGFGFVTYLSTDEVDAAMTARPHKVDGRVVEPKRAVSREDSSRPGAHLTVKKIFVGGIKEDTEEDHLREYFEQYGKIEVIEIMTDRGSGKKRGFAFVTFEDHDSVDKIVIQKYHTVNNHNSQVRKALSKQEMASVSGSQRERGGSGNYGSRGGFGNDNFGGRGGNFGGNRGGGGGFGNRGYGGDGYNGDGQLWWQPSLLGWNRGYGAGQGGGYGAGQGGGYGGGGQGGGYGGNGGYDGYNGGGSGFSGSGGNFGSSGGYNDFGNYNSQSSSNFGPMKGGNYGGGRNSGPYGGGYGGGSASSSSGYGGGRRF.

Residues 4–94 (SEAPNEPEQL…EPKRAVSRED (91 aa)) form a globular A domain region. RRM domains follow at residues 14–97 (RKLF…DSSR) and 105–184 (KKIF…LSKQ). Positions 95-185 (SSRPGAHLTV…QVRKALSKQE (91 aa)) are globular B domain. Disordered regions lie at residues 175 to 208 (SQVR…RGGF) and 328 to 365 (GPMK…GRRF). Gly residues-rich tracts occupy residues 198-208 (GSGNYGSRGGF) and 330-365 (MKGG…GRRF). A nuclear targeting sequence region spans residues 321–359 (SQSSSNFGPMKGGNYGGGRNSGPYGGGYGGGSASSSSGY).

The protein resides in the nucleus. Its subcellular location is the cytoplasm. In terms of biological role, this protein is a component of ribonucleosomes. The polypeptide is Heterogeneous nuclear ribonucleoproteins A1 homolog (hnrnpa1) (Xenopus laevis (African clawed frog)).